The sequence spans 286 residues: Ribosome-inactivating protein beta-momorcharin (286 aa).

An N-terminal signal peptide occupies residues 1–23 (MVKCLLLSFLIIAIFIGVPTAKG). A glycan (N-linked (GlcNAc...) asparagine) is linked at N74. Residues Y93, Y132, E181, and R184 contribute to the active site.

This sequence belongs to the ribosome-inactivating protein family. Type 1 RIP subfamily. Bound to a branched hexasaccharide.

The enzyme catalyses Endohydrolysis of the N-glycosidic bond at one specific adenosine on the 28S rRNA.. Irreversibly relaxes supercoiled DNA and catalyzes double-stranded breakage. Also acts as a ribosome inactivating protein. The protein is Ribosome-inactivating protein beta-momorcharin (MAP30) of Momordica charantia (Bitter gourd).